The sequence spans 499 residues: MTYKDLRNFIKTLEYQGELKKIDFPVDPNLEITEIAHRTLKSQGPALLFTNPIGHSIPILCNLFGTISRIELGIGIKNILSLRDIGKLLAFLKEPQIPTGFRDFLSKIPNFRQILNMPIKHVSNAVCQENIWNNAQDIDITQMPIMKSWPGDISIAITWGITITQGFTNKRQNLGIYRHQVLSKNKIIIRWLAHRGGALDFQEWYTHSSEKKFPIAIALGADPATLIGAAIPIPNTLSEYAFSGLLRGSKTAVTKCISSNLYVPAYSEIILEGYINRDDIAVEGPFGDHTGYYNSTEKFPVCTITHITHRNNPIYHSTYTGRPPDEPSILGMAMNELFIPIIQKQFPEIIDFYLPPEGCSYRLAIVTIKKQFLGHAKKIIFGVWSCLNQFMYTKFILVCDDDINARDWKDVIWAISTRMDPARDIIIAENTPIDYLDFSSPISGLGSKMGIDATNKWPGETQRTWGKPIQMNNSIQSRINDIWDQLHIPCNEKPFKHKN.

Asn173 is a Mn(2+) binding site. Residues 176 to 178 (IYR), 190 to 192 (RWL), and 195 to 196 (RG) each bind prenylated FMN. Glu239 serves as a coordination point for Mn(2+). Asp288 (proton donor) is an active-site residue.

It belongs to the UbiD family. In terms of assembly, homohexamer. Requires prenylated FMN as cofactor. It depends on Mn(2+) as a cofactor.

Its subcellular location is the cell membrane. The catalysed reaction is a 4-hydroxy-3-(all-trans-polyprenyl)benzoate + H(+) = a 2-(all-trans-polyprenyl)phenol + CO2. It functions in the pathway cofactor biosynthesis; ubiquinone biosynthesis. Its function is as follows. Catalyzes the decarboxylation of 3-octaprenyl-4-hydroxy benzoate to 2-octaprenylphenol, an intermediate step in ubiquinone biosynthesis. This chain is 3-octaprenyl-4-hydroxybenzoate carboxy-lyase, found in Blochmanniella floridana.